Consider the following 176-residue polypeptide: Protein singles bar (176 aa).

4 helical membrane passes run 13–35 (LGIR…LSRI), 71–91 (FLAT…CYAF), 111–131 (LASC…VVWL), and 140–160 (GFWA…AGIL). One can recognise an MARVEL domain in the interval 30 to 173 (FVLSRIGLLK…DAYLAFRHFR (144 aa)).

It localises to the membrane. Essential for myoblast fusion in developing embryos and pupae, and consequently is essential for muscle formation in adults. Required for progression past the pre-fusion complex stage of myoblast fusion. The chain is Protein singles bar from Drosophila melanogaster (Fruit fly).